Reading from the N-terminus, the 364-residue chain is Fructose-bisphosphate aldolase B (364 aa).

Ala-2 is modified (N-acetylalanine). Lys-13 carries the post-translational modification N6-succinyllysine. Ser-36 carries the post-translational modification Phosphoserine. A Phosphothreonine modification is found at Thr-39. Arg-43 contributes to the beta-D-fructose 1,6-bisphosphate binding site. At Ser-89 the chain carries Phosphoserine. Thr-119 carries the phosphothreonine modification. Residue Lys-121 is modified to N6-succinyllysine. Phosphoserine is present on Ser-132. The Proton acceptor role is filled by Glu-188. Catalysis depends on Lys-230, which acts as the Schiff-base intermediate with dihydroxyacetone-P. Residues Ser-272, Ser-276, Ser-299, and Ser-301 each carry the phosphoserine modification. 272–274 provides a ligand contact to beta-D-fructose 1,6-bisphosphate; it reads SGG. Arg-304 is a beta-D-fructose 1,6-bisphosphate binding site. At Ser-309 the chain carries Phosphoserine. Lys-317 carries the post-translational modification N6-succinyllysine.

The protein belongs to the class I fructose-bisphosphate aldolase family. As to quaternary structure, homotetramer. Interacts with BBS1, BBS2, BBS4 and BBS7. Forms a ternary complex with G6PD and TP53; this interaction is direct.

The protein localises to the cytoplasm. Its subcellular location is the cytosol. The protein resides in the cytoskeleton. It localises to the microtubule organizing center. It is found in the centrosome. The protein localises to the centriolar satellite. The catalysed reaction is beta-D-fructose 1,6-bisphosphate = D-glyceraldehyde 3-phosphate + dihydroxyacetone phosphate. It carries out the reaction beta-D-fructose 1-phosphate = D-glyceraldehyde + dihydroxyacetone phosphate. It functions in the pathway carbohydrate degradation; glycolysis; D-glyceraldehyde 3-phosphate and glycerone phosphate from D-glucose: step 4/4. The protein operates within carbohydrate biosynthesis; gluconeogenesis. Its pathway is carbohydrate metabolism; fructose metabolism. Functionally, catalyzes the aldol cleavage of fructose 1,6-biphosphate to form two triosephosphates dihydroxyacetone phosphate and D-glyceraldehyde 3-phosphate in glycolysis as well as the reverse stereospecific aldol addition reaction in gluconeogenesis. In fructolysis, metabolizes fructose 1-phosphate derived from the phosphorylation of dietary fructose by fructokinase into dihydroxyacetone phosphate and D-glyceraldehyde. Acts as an adapter independently of its enzymatic activity, exerts a tumor suppressor role by stabilizing the ternary complex with G6PD and TP53 to inhibit G6PD activity and keep oxidative pentose phosphate metabolism in check. This is Fructose-bisphosphate aldolase B (Aldob) from Rattus norvegicus (Rat).